Reading from the N-terminus, the 94-residue chain is Conotoxin Gla-MrII (94 aa).

An N-terminal signal peptide occupies residues 1 to 25 (MFGHTSVSFLLLSIVALGMVATVIC). Residues Glu30, Glu34, Glu37, Glu40, and Glu41 each carry the 4-carboxyglutamate modification. Residues 78 to 94 (STHMQKRFLRMPRDLAD) constitute a propeptide that is removed on maturation.

It belongs to the conotoxin I2 superfamily. Contains 4 disulfide bonds. In terms of tissue distribution, expressed by the venom duct.

Its subcellular location is the secreted. This is Conotoxin Gla-MrII from Conus marmoreus (Marble cone).